The chain runs to 322 residues: METQATLNSIQKAVWDGRLPLQIRLAPSESRIYDQTDPYLISYPRISYLPSLLPRLRAFFASSLIDPSSNAHDGWFSFEGVPLKWHLPIGLLYDLYAGADPASKGTAESEDAGWDIDDQDNPLPWRLVVHFSDWPDEELVRLDAEGMVMNDAFINSVKEADFLRNGTAKGIMSLSKEDSSGLWKSVQNVELSSFQRISNILLPPLNQPFRNIPIRIFLPLPPDSGSPSLKIVQSPVPPLIPPSSVAASQLALSRSSITPQTQTIGSALHSLLPNLFPSRRTPVLAKPVLHGAAVPMSAPVEELVRSSAYGDGWLYVVIRMMG.

Residue K158 forms a Glycyl lysine isopeptide (Lys-Gly) (interchain with G-Cter in atg12) linkage.

This sequence belongs to the ATG5 family. Conjugated with atg12. Conjugated to atg12; which is essential for autophagy.

It localises to the preautophagosomal structure membrane. Its function is as follows. Involved in cytoplasm to vacuole transport (Cvt) and autophagic vesicle formation. Autophagy is essential for maintenance of amino acid levels and protein synthesis under nitrogen starvation. Required for selective autophagic degradation of the nucleus (nucleophagy). Also required for mitophagy, which eliminates defective or superfluous mitochondria in order to fulfill cellular energy requirements and prevent excess ROS production. Conjugation with atg12, through a ubiquitin-like conjugating system involving atg7 as an E1-like activating enzyme and atg10 as an E2-like conjugating enzyme, is essential for its function. The atg12-atg5 conjugate acts as an E3-like enzyme which is required for lipidation of atg8 and atg8 association to the vesicle membranes. This is Autophagy protein 5 (atg5) from Aspergillus oryzae (strain ATCC 42149 / RIB 40) (Yellow koji mold).